Consider the following 825-residue polypeptide: Penicillin-binding protein 1A (825 aa).

Residues 1–6 (MKFIKR) lie on the Cytoplasmic side of the membrane. Residues 7 to 27 (LLVFSLICIILGVTTIFGFYF) traverse the membrane as a helical; Signal-anchor for type II membrane protein segment. Over 28–825 (YVKSDLPDVA…YSTSSGEELF (798 aa)) the chain is Periplasmic. Positions 48 to 216 (MQVFSQDGKL…STMNPIYSVE (169 aa)) are transglycosylase. Residue Glu-86 is the Proton donor; for transglycosylase activity of the active site. Residues 413-752 (PRTQDGAITA…GKTALPAWVE (340 aa)) are transpeptidase. The active-site Acyl-ester intermediate; for transpeptidase activity is the Ser-471.

In the N-terminal section; belongs to the glycosyltransferase 51 family. The protein in the C-terminal section; belongs to the transpeptidase family.

The protein resides in the cell inner membrane. It carries out the reaction [GlcNAc-(1-&gt;4)-Mur2Ac(oyl-L-Ala-gamma-D-Glu-L-Lys-D-Ala-D-Ala)](n)-di-trans,octa-cis-undecaprenyl diphosphate + beta-D-GlcNAc-(1-&gt;4)-Mur2Ac(oyl-L-Ala-gamma-D-Glu-L-Lys-D-Ala-D-Ala)-di-trans,octa-cis-undecaprenyl diphosphate = [GlcNAc-(1-&gt;4)-Mur2Ac(oyl-L-Ala-gamma-D-Glu-L-Lys-D-Ala-D-Ala)](n+1)-di-trans,octa-cis-undecaprenyl diphosphate + di-trans,octa-cis-undecaprenyl diphosphate + H(+). It catalyses the reaction Preferential cleavage: (Ac)2-L-Lys-D-Ala-|-D-Ala. Also transpeptidation of peptidyl-alanyl moieties that are N-acyl substituents of D-alanine.. It participates in cell wall biogenesis; peptidoglycan biosynthesis. Its function is as follows. Cell wall formation. Synthesis of cross-linked peptidoglycan from the lipid intermediates. The enzyme has a penicillin-insensitive transglycosylase N-terminal domain (formation of linear glycan strands) and a penicillin-sensitive transpeptidase C-terminal domain (cross-linking of the peptide subunits). This chain is Penicillin-binding protein 1A (mrcA), found in Vibrio cholerae serotype O1 (strain ATCC 39315 / El Tor Inaba N16961).